The sequence spans 76 residues: Translational regulator CsrA (76 aa).

Belongs to the CsrA/RsmA family. In terms of assembly, homodimer; the beta-strands of each monomer intercalate to form a hydrophobic core, while the alpha-helices form wings that extend away from the core.

The protein localises to the cytoplasm. Functionally, a translational regulator that binds mRNA to regulate translation initiation and/or mRNA stability. Usually binds in the 5'-UTR at or near the Shine-Dalgarno sequence preventing ribosome-binding, thus repressing translation. Its main target seems to be the major flagellin gene, while its function is anatagonized by FliW. This is Translational regulator CsrA from Syntrophomonas wolfei subsp. wolfei (strain DSM 2245B / Goettingen).